A 214-amino-acid chain; its full sequence is Pyrrolidone-carboxylate peptidase (214 aa).

Active-site residues include E80, C143, and H166.

It belongs to the peptidase C15 family. As to quaternary structure, homotetramer.

It is found in the cytoplasm. It catalyses the reaction Release of an N-terminal pyroglutamyl group from a polypeptide, the second amino acid generally not being Pro.. Removes 5-oxoproline from various penultimate amino acid residues except L-proline. The sequence is that of Pyrrolidone-carboxylate peptidase from Klebsiella pneumoniae (strain 342).